The following is a 362-amino-acid chain: Adenosine deaminase (362 aa).

Residues His-19 and His-21 each coordinate Zn(2+). Substrate is bound by residues His-21, Asp-23, and Gly-181. His-208 is a binding site for Zn(2+). Glu-211 (proton donor) is an active-site residue. A Zn(2+)-binding site is contributed by Asp-300.

This sequence belongs to the metallo-dependent hydrolases superfamily. Adenosine and AMP deaminases family. Adenosine deaminase subfamily. It depends on Zn(2+) as a cofactor.

It carries out the reaction adenosine + H2O + H(+) = inosine + NH4(+). The enzyme catalyses 2'-deoxyadenosine + H2O + H(+) = 2'-deoxyinosine + NH4(+). Functionally, catalyzes the hydrolytic deamination of adenosine and 2-deoxyadenosine. This Mycobacterium ulcerans (strain Agy99) protein is Adenosine deaminase.